Here is a 687-residue protein sequence, read N- to C-terminus: Ribosomal RNA processing protein 1 homolog (687 aa).

Residues 288–298 (DEEDDEVNAEE) show a composition bias toward acidic residues. Disordered regions lie at residues 288–312 (DEED…RAGN) and 463–624 (VKEA…GSGK). Basic and acidic residues-rich tracts occupy residues 463–488 (VKEA…DQTK), 497–520 (PKND…EEPA), and 527–543 (HSKT…DEQP). A compositionally biased stretch (low complexity) spans 554 to 564 (KAKPTPKTKAA). Over residues 596–608 (KQANSKLPQSTPK) the composition is skewed to polar residues. Phosphothreonine is present on residues threonine 617 and threonine 620. Serine 622 is subject to Phosphoserine.

It belongs to the RRP1 family.

The protein resides in the nucleus. Its function is as follows. May be involved in the generation of 28S rRNA. This Drosophila melanogaster (Fruit fly) protein is Ribosomal RNA processing protein 1 homolog (Nnp-1).